Consider the following 208-residue polypeptide: Small ribosomal subunit protein uS4 (208 aa).

The region spanning 98-160 (SRLDNVAYNM…AKSYLRIKSS (63 aa)) is the S4 RNA-binding domain.

Belongs to the universal ribosomal protein uS4 family. In terms of assembly, part of the 30S ribosomal subunit. Contacts protein S5. The interaction surface between S4 and S5 is involved in control of translational fidelity.

Its function is as follows. One of the primary rRNA binding proteins, it binds directly to 16S rRNA where it nucleates assembly of the body of the 30S subunit. Functionally, with S5 and S12 plays an important role in translational accuracy. The protein is Small ribosomal subunit protein uS4 of Nitrosomonas eutropha (strain DSM 101675 / C91 / Nm57).